A 243-amino-acid polypeptide reads, in one-letter code: Phosphoribosyl isomerase A (243 aa).

Asp-10 acts as the Proton acceptor in catalysis. Catalysis depends on Asp-129, which acts as the Proton donor.

It belongs to the HisA/HisF family.

The protein localises to the cytoplasm. The enzyme catalyses 1-(5-phospho-beta-D-ribosyl)-5-[(5-phospho-beta-D-ribosylamino)methylideneamino]imidazole-4-carboxamide = 5-[(5-phospho-1-deoxy-D-ribulos-1-ylimino)methylamino]-1-(5-phospho-beta-D-ribosyl)imidazole-4-carboxamide. It catalyses the reaction N-(5-phospho-beta-D-ribosyl)anthranilate = 1-(2-carboxyphenylamino)-1-deoxy-D-ribulose 5-phosphate. Its pathway is amino-acid biosynthesis; L-histidine biosynthesis; L-histidine from 5-phospho-alpha-D-ribose 1-diphosphate: step 4/9. The protein operates within amino-acid biosynthesis; L-tryptophan biosynthesis; L-tryptophan from chorismate: step 3/5. Functionally, involved in both the histidine and tryptophan biosynthetic pathways. This chain is Phosphoribosyl isomerase A, found in Mycobacteroides abscessus (strain ATCC 19977 / DSM 44196 / CCUG 20993 / CIP 104536 / JCM 13569 / NCTC 13031 / TMC 1543 / L948) (Mycobacterium abscessus).